The primary structure comprises 620 residues: Sodium-dependent dopamine transporter (620 aa).

At 1–56 (MSKSKCSVGLMSSVVAPAKEPNAMGPKEVELILVKEQNGVQLTSSTLTNPRQSPVE) the chain is on the cytoplasmic side. Residues 57–95 (AQDRETWGKKIDFLLSVIGFAVDLANVWRFPYLCYKNGG) traverse the membrane as a discontinuously helical segment. Na(+) contacts are provided by Gly75, Ala77, Val78, Asp79, and Asn82. Asp79 provides a ligand contact to dopamine. Helical transmembrane passes span 96 to 127 (GAFL…NREG) and 128 to 171 (AAGV…FSSF). Dopamine-binding residues include Ser149 and Gly153. Residues 172–236 (TTELPWIHCN…SHGIDDLGPP (65 aa)) are Extracellular-facing. A disulfide bridge links Cys180 with Cys189. Asn181, Asn188, and Asn205 each carry an N-linked (GlcNAc...) asparagine glycan. 2 helical membrane passes run 237–256 (RWQL…FSLW) and 257–287 (KGVK…GVTL). Residues 288-306 (PGAIDGIRAYLSVDFYRLC) are Extracellular-facing. The chain crosses the membrane as a discontinuously helical span at residues 307–335 (EASVWIDAATQVCFSLGVGFGVLIAFSSY). Chloride is bound at residue Gln317. Phe320 is a binding site for dopamine. Na(+) contacts are provided by Ser321 and Asn353. Position 321 (Ser321) interacts with chloride. Residues 336-376 (NKFTNNCYRDAIVTTSINSLTSFSSGFVVFSFLGYMAQKHS) traverse the membrane as a helical segment. Ser357 contributes to the chloride binding site. The Extracellular portion of the chain corresponds to 377–400 (VPIGDVAKDGPGLIFIIYPEAIAT). Helical transmembrane passes span 401–442 (LPLS…QLLH), 443–466 (RHRE…CVTN), and 467–499 (GGIY…AWFY). 3 residues coordinate Na(+): Leu418, Asp421, and Ser422. Ser422 and Ala423 together coordinate dopamine. At 500–516 (GVGQFSDDIQQMTGQRP) the chain is on the cytoplasmic side. The chain crosses the membrane as a helical span at residues 517 to 542 (SLYWRLCWKLVSPCFLLFVVVVSIVT). Topologically, residues 543–553 (FRPPHYGAYIF) are extracellular. Residues 554–583 (PDWANALGWVIATSSMAMVPIYAAYKFCSL) traverse the membrane as a helical segment. Residues 561–590 (GWVIATSSMAMVPIYAAYKFCSLPGSFREK) form an interaction with TGFB1I1 region. Residues 584–620 (PGSFREKLAYAIAPEKDRELVDRGEVRQFTLRHWLKV) lie on the Cytoplasmic side of the membrane.

The protein belongs to the sodium:neurotransmitter symporter (SNF) (TC 2.A.22) family. SLC6A3 subfamily. In terms of assembly, monomer. Homooligomer; disulfide-linked. Interacts with PRKCABP and TGFB1I1. Interacts (via N-terminus) with SYNGR3 (via N-terminus). Interacts with SLC18A2. Interacts with TOR1A (ATP-bound); TOR1A regulates SLC6A3 subcellular location. Interacts with alpha-synuclein/SNCA. Interacts with SEPTIN4.

The protein resides in the cell membrane. It is found in the cell projection. The protein localises to the neuron projection. It localises to the axon. It catalyses the reaction dopamine(out) + chloride(out) + Na(+)(out) = dopamine(in) + chloride(in) + Na(+)(in). The catalysed reaction is (R)-noradrenaline(out) + chloride(out) + Na(+)(out) = (R)-noradrenaline(in) + chloride(in) + Na(+)(in). The enzyme catalyses dopamine(out) + chloride(out) + 2 Na(+)(out) = dopamine(in) + chloride(in) + 2 Na(+)(in). With respect to regulation, inhibited by zinc ions. Functionally, mediates sodium- and chloride-dependent transport of dopamine. Also mediates sodium- and chloride-dependent transport of norepinephrine (also known as noradrenaline). Regulator of light-dependent retinal hyaloid vessel regression, downstream of OPN5 signaling. This Macaca fascicularis (Crab-eating macaque) protein is Sodium-dependent dopamine transporter (SLC6A3).